The chain runs to 354 residues: Uroporphyrinogen decarboxylase (354 aa).

Substrate contacts are provided by residues 28 to 32 (RQAGR), D78, Y155, S210, and H325.

Belongs to the uroporphyrinogen decarboxylase family. Homodimer.

The protein resides in the cytoplasm. The enzyme catalyses uroporphyrinogen III + 4 H(+) = coproporphyrinogen III + 4 CO2. The protein operates within porphyrin-containing compound metabolism; protoporphyrin-IX biosynthesis; coproporphyrinogen-III from 5-aminolevulinate: step 4/4. Functionally, catalyzes the decarboxylation of four acetate groups of uroporphyrinogen-III to yield coproporphyrinogen-III. The sequence is that of Uroporphyrinogen decarboxylase from Trichodesmium erythraeum (strain IMS101).